The following is a 507-amino-acid chain: Sugar transport protein 8 (507 aa).

Over 1–21 (MAVVISSNGNSKSFDAKMTVY) the chain is Cytoplasmic. 12 consecutive transmembrane segments (helical) span residues 22 to 42 (VFICVIIAAVGGLIFGYDIGI), 79 to 99 (FLQLFTSSLYLAALVASFFAS), 116 to 136 (IFFLIGVGLAAGAVNIYMLII), 139 to 159 (ILLGFGVGFGNQAVPLFLSEI), 166 to 186 (GGLNIVFQLMVTIGILIANIV), 200 to 220 (IALGGAGIPALILLFGSLLIC), 281 to 301 (FVIGMLLQFFQQFTGINAIMF), 319 to 339 (LSAVVTGTINVLSTFVGIFLV), 346 to 366 (FLLLQSSVHMLICQLVIGIIL), 382 to 402 (LVVVIFVCVYVMGFAWSWGPL), 419 to 439 (GFALAVSCNMFFTFVIAQAFL), and 448 to 468 (GIFFFFSGWIVVMGLFALFFV). The Cytoplasmic portion of the chain corresponds to 469-507 (PETKGVSIDDMRDSVWKLHWYWKRFMLEEDEHDVEKRTD).

It belongs to the major facilitator superfamily. Sugar transporter (TC 2.A.1.1) family.

The protein localises to the membrane. Mediates an active uptake of hexoses, probably by sugar/hydrogen symport. In Arabidopsis thaliana (Mouse-ear cress), this protein is Sugar transport protein 8 (STP8).